The primary structure comprises 372 residues: Cytochrome b (372 aa).

A run of 4 helical transmembrane segments spans residues 25–45 (FGSM…FLAI), 69–90 (WIMQ…YIHI), 105–125 (WLSG…GYVL), and 170–190 (FFAL…IHII). Heme b is bound by residues histidine 75 and histidine 89. Heme b-binding residues include histidine 174 and histidine 188. Histidine 193 contacts a ubiquinone. 4 helical membrane-spanning segments follow: residues 218-238 (YKDM…LSFS), 280-300 (LGGA…PFTH), 312-332 (LSQI…WTAS), and 339-358 (FISI…ITIP).

This sequence belongs to the cytochrome b family. The cytochrome bc1 complex contains 3 respiratory subunits (MT-CYB, CYC1 and UQCRFS1), 2 core proteins (UQCRC1 and UQCRC2) and probably 6 low-molecular weight proteins. Heme b is required as a cofactor.

Its subcellular location is the mitochondrion inner membrane. Functionally, component of the ubiquinol-cytochrome c reductase complex (complex III or cytochrome b-c1 complex) that is part of the mitochondrial respiratory chain. The b-c1 complex mediates electron transfer from ubiquinol to cytochrome c. Contributes to the generation of a proton gradient across the mitochondrial membrane that is then used for ATP synthesis. The polypeptide is Cytochrome b (MT-CYB) (Naja annulata annulata (Banded water cobra)).